A 515-amino-acid chain; its full sequence is MTTPYKHEPFTDFSQEENRKAFEQALGKVTETLGQTYPLVINGERIETKDQIVSINPAKKDEVVGTVSKAGKEEAEQAVQAAAKAFETWRYTSPEERASVIFRAAANIRRKKHEYSALLVKEAGKPWNEADADTAEAIDFLEYYARQMLELAKGKPVNSREGEHNQYVYTPTGVTLVIPPWNFLFAIMAGTTVAPIVTGNTVVLKPASATPVIAARFVEELEQAGLPKGVVNFVPGSGAEVGDYLVDHPKTSLITFTGSREVGTRIFERAAKVQPGQQHLKRVIAEMGGKDTVVVDEDADVELAANAIFTSAFGFSGQKCSAGSRAVVHEKLYDQVIERVKEITETKTTANPLSADVYMGPVIDQASFDKITDYIEVGKQEGRLVTGGTSDDTEGYFIHPTVFADLEPTSRLMQEEIFGPVLAFSKVSSFDEALEVANNTEYGLTGAVITNNRDHINRAKQEFHVGNLYFNRNCTGAIVGYHPFGGFKMSGTDSKAGGPDYLALHMQAKTISEMF.

Active-site residues include Glu-286 and Cys-320.

It belongs to the aldehyde dehydrogenase family. RocA subfamily.

It catalyses the reaction L-glutamate 5-semialdehyde + NAD(+) + H2O = L-glutamate + NADH + 2 H(+). It participates in amino-acid degradation; L-proline degradation into L-glutamate; L-glutamate from L-proline: step 2/2. The chain is 1-pyrroline-5-carboxylate dehydrogenase from Bacillus pumilus (strain SAFR-032).